The following is a 436-amino-acid chain: Serine protease inhibitor A6 (436 aa).

Positions 1 to 16 (MHLLVYLSLFFALALA) are cleaved as a signal peptide. The segment at 26 to 60 (KHRHRHEQQGHHDSAKHGHQKDKQQQEQIKNDEGK) is disordered. Residues 32–60 (EQQGHHDSAKHGHQKDKQQQEQIKNDEGK) are compositionally biased toward basic and acidic residues. Residues Asn260 and Asn289 are each glycosylated (N-linked (GlcNAc...) asparagine).

Belongs to the serpin family. As to expression, liver.

Its subcellular location is the secreted. It localises to the extracellular space. Functionally, not yet known. In Xenopus laevis (African clawed frog), this protein is Serine protease inhibitor A6 (serpina6).